Reading from the N-terminus, the 354-residue chain is Uroporphyrinogen decarboxylase (354 aa).

Residues 27 to 31 (RQAGR), Asp-77, Tyr-154, Ser-209, and His-327 contribute to the substrate site.

This sequence belongs to the uroporphyrinogen decarboxylase family. Homodimer.

The protein resides in the cytoplasm. It catalyses the reaction uroporphyrinogen III + 4 H(+) = coproporphyrinogen III + 4 CO2. Its pathway is porphyrin-containing compound metabolism; protoporphyrin-IX biosynthesis; coproporphyrinogen-III from 5-aminolevulinate: step 4/4. Catalyzes the decarboxylation of four acetate groups of uroporphyrinogen-III to yield coproporphyrinogen-III. This Shewanella denitrificans (strain OS217 / ATCC BAA-1090 / DSM 15013) protein is Uroporphyrinogen decarboxylase.